Here is a 245-residue protein sequence, read N- to C-terminus: Eukaryotic translation initiation factor 6 (245 aa).

This sequence belongs to the eIF-6 family. In terms of assembly, monomer. Associates with the 60S ribosomal subunit.

The protein resides in the cytoplasm. Its subcellular location is the nucleus. It is found in the nucleolus. In terms of biological role, binds to the 60S ribosomal subunit and prevents its association with the 40S ribosomal subunit to form the 80S initiation complex in the cytoplasm. May also be involved in ribosome biogenesis. In Ostreococcus lucimarinus (strain CCE9901), this protein is Eukaryotic translation initiation factor 6.